Consider the following 657-residue polypeptide: Translation factor GUF1, mitochondrial (657 aa).

The N-terminal 39 residues, 1–39 (MRGCLQSVKWLTSALRPSQSLASSTRYPRRLLSTSAPRN), are a transit peptide targeting the mitochondrion. A tr-type G domain is found at 59-239 (ERFRNFCIVA…TVIEQIPAPV (181 aa)). GTP-binding positions include 68–75 (AHVDHGKS), 132–136 (DTPGH), and 186–189 (NKVD).

Belongs to the TRAFAC class translation factor GTPase superfamily. Classic translation factor GTPase family. LepA subfamily.

The protein localises to the mitochondrion inner membrane. It carries out the reaction GTP + H2O = GDP + phosphate + H(+). Functionally, promotes mitochondrial protein synthesis. May act as a fidelity factor of the translation reaction, by catalyzing a one-codon backward translocation of tRNAs on improperly translocated ribosomes. Binds to mitochondrial ribosomes in a GTP-dependent manner. In Ajellomyces capsulatus (strain G186AR / H82 / ATCC MYA-2454 / RMSCC 2432) (Darling's disease fungus), this protein is Translation factor GUF1, mitochondrial.